The chain runs to 354 residues: 2-methylisoborneol synthase (354 aa).

The tract at residues Met-1 to Pro-29 is disordered. Mg(2+) is bound by residues Asp-113, Asp-114, Glu-118, Asn-264, Ser-268, and Glu-272.

The protein belongs to the terpene synthase family. 2-methylisoborneol synthase subfamily. Mg(2+) serves as cofactor.

The catalysed reaction is (E)-2-methylgeranyl diphosphate + H2O = 2-methylisoborneol + diphosphate. Catalyzes the cyclization of 2-methylgeranyl diphosphate (2-MeGPP) to 2-methylisoborneol (2-MIB), which likely involves the intermediacy of 2-methyllinalyl diphosphate. This Saccharopolyspora erythraea (strain ATCC 11635 / DSM 40517 / JCM 4748 / NBRC 13426 / NCIMB 8594 / NRRL 2338) protein is 2-methylisoborneol synthase.